A 494-amino-acid chain; its full sequence is UPF0371 protein SpyM3_1021 (494 aa).

This sequence belongs to the UPF0371 family.

The protein is UPF0371 protein SpyM3_1021 of Streptococcus pyogenes serotype M3 (strain ATCC BAA-595 / MGAS315).